Reading from the N-terminus, the 195-residue chain is Imidazoleglycerol-phosphate dehydratase (195 aa).

This sequence belongs to the imidazoleglycerol-phosphate dehydratase family.

Its subcellular location is the cytoplasm. It carries out the reaction D-erythro-1-(imidazol-4-yl)glycerol 3-phosphate = 3-(imidazol-4-yl)-2-oxopropyl phosphate + H2O. It participates in amino-acid biosynthesis; L-histidine biosynthesis; L-histidine from 5-phospho-alpha-D-ribose 1-diphosphate: step 6/9. This is Imidazoleglycerol-phosphate dehydratase from Cereibacter sphaeroides (strain ATCC 17029 / ATH 2.4.9) (Rhodobacter sphaeroides).